The sequence spans 527 residues: Bifunctional pantoate ligase/cytidylate kinase (527 aa).

The segment at 1–277 is pantoate--beta-alanine ligase; the sequence is MRQLISPEAL…VGTARLIDNL (277 aa). 27-34 is an ATP binding site; it reads MGALHAGH. Residue H34 is the Proton donor of the active site. Q58 contributes to the (R)-pantoate binding site. Q58 is a beta-alanine binding site. 147 to 150 lines the ATP pocket; it reads GEKD. Q153 serves as a coordination point for (R)-pantoate. Residues V176 and 184–187 each bind ATP; that span reads LSSR. The tract at residues 278–527 is cytidylate kinase; the sequence is TLQGRRPIIA…GQTPSPLSLG (250 aa). The disordered stretch occupies residues 507–527; the sequence is GLGDSSPQATPGQTPSPLSLG. Residues 511–527 are compositionally biased toward polar residues; the sequence is SSPQATPGQTPSPLSLG.

In the N-terminal section; belongs to the pantothenate synthetase family. It in the C-terminal section; belongs to the cytidylate kinase family. Type 1 subfamily.

The protein localises to the cytoplasm. The catalysed reaction is (R)-pantoate + beta-alanine + ATP = (R)-pantothenate + AMP + diphosphate + H(+). It carries out the reaction CMP + ATP = CDP + ADP. It catalyses the reaction dCMP + ATP = dCDP + ADP. It participates in cofactor biosynthesis; (R)-pantothenate biosynthesis; (R)-pantothenate from (R)-pantoate and beta-alanine: step 1/1. In terms of biological role, catalyzes the condensation of pantoate with beta-alanine in an ATP-dependent reaction via a pantoyl-adenylate intermediate. Functionally, catalyzes the transfer of a phosphate group from ATP to either CMP or dCMP to form CDP or dCDP and ADP, respectively. The protein is Bifunctional pantoate ligase/cytidylate kinase of Synechococcus elongatus (strain ATCC 33912 / PCC 7942 / FACHB-805) (Anacystis nidulans R2).